We begin with the raw amino-acid sequence, 527 residues long: Peptide chain release factor 3 (527 aa).

Positions 9-277 constitute a tr-type G domain; the sequence is AKRRTFAIIS…AVVDWAPRPL (269 aa). Residues 18–25, 86–90, and 140–143 each bind GTP; these read SHPDAGKT, DTPGH, and NKLD.

This sequence belongs to the TRAFAC class translation factor GTPase superfamily. Classic translation factor GTPase family. PrfC subfamily.

The protein localises to the cytoplasm. Its function is as follows. Increases the formation of ribosomal termination complexes and stimulates activities of RF-1 and RF-2. It binds guanine nucleotides and has strong preference for UGA stop codons. It may interact directly with the ribosome. The stimulation of RF-1 and RF-2 is significantly reduced by GTP and GDP, but not by GMP. This is Peptide chain release factor 3 from Pseudomonas putida (strain W619).